A 292-amino-acid chain; its full sequence is Ribosomal RNA small subunit methyltransferase A (292 aa).

S-adenosyl-L-methionine-binding residues include N28, L30, G55, E76, D101, and N126.

This sequence belongs to the class I-like SAM-binding methyltransferase superfamily. rRNA adenine N(6)-methyltransferase family. RsmA subfamily.

The protein resides in the cytoplasm. The enzyme catalyses adenosine(1518)/adenosine(1519) in 16S rRNA + 4 S-adenosyl-L-methionine = N(6)-dimethyladenosine(1518)/N(6)-dimethyladenosine(1519) in 16S rRNA + 4 S-adenosyl-L-homocysteine + 4 H(+). Its function is as follows. Specifically dimethylates two adjacent adenosines (A1518 and A1519) in the loop of a conserved hairpin near the 3'-end of 16S rRNA in the 30S particle. May play a critical role in biogenesis of 30S subunits. The protein is Ribosomal RNA small subunit methyltransferase A of Bacillus anthracis.